The following is a 556-amino-acid chain: Glutamine--tRNA ligase (556 aa).

The 'HIGH' region motif lies at 34–44 (PEPNGYLHIGH). ATP contacts are provided by residues 35–37 (EPN) and 41–47 (HIGHAKS). Aspartate 67 and tyrosine 212 together coordinate L-glutamine. Residues threonine 231, 261–262 (RL), and 269–271 (MSK) contribute to the ATP site. Positions 268–272 (VMSKR) match the 'KMSKS' region motif.

It belongs to the class-I aminoacyl-tRNA synthetase family. In terms of assembly, monomer.

It localises to the cytoplasm. It catalyses the reaction tRNA(Gln) + L-glutamine + ATP = L-glutaminyl-tRNA(Gln) + AMP + diphosphate. This is Glutamine--tRNA ligase from Vibrio cholerae serotype O1 (strain ATCC 39315 / El Tor Inaba N16961).